A 507-amino-acid polypeptide reads, in one-letter code: Myocyte-specific enhancer factor 2A (507 aa).

One can recognise an MADS-box domain in the interval 3-57 (RKKIQITRIMDERNRQVTFTKRKFGLMKKAYELSVLCDCEIALIIFNSSNKLFQY). At Lys-30 the chain carries Phosphoserine. The segment at residues 58 to 86 (ASTDMDKVLLKYTEYNEPHESRTNSDIVE) is a DNA-binding region (mef2-type). A Phosphoserine; by CK2 modification is found at Ser-59. A Phosphoserine modification is found at Ser-98. Over residues 173–183 (TLTDSSMLSPP) the composition is skewed to low complexity. The tract at residues 173 to 229 (TLTDSSMLSPPQTTLHRNVSPGAPQRPPSTGNAGGMLSTTDLTVPNGAGSSPVGNGF) is disordered. A compositionally biased stretch (polar residues) spans 209-229 (LSTTDLTVPNGAGSSPVGNGF). Ser-235 is subject to Phosphoserine. The disordered stretch occupies residues 243 to 270 (GANSLGKVMPTKSPPPPGGGNLGMNSRK). Lys-249 carries the post-translational modification N6-acetyllysine. Position 255 is a phosphoserine; by MAPK14 (Ser-255). The segment at 266 to 283 (MNSRKPDLRVVIPPSSKG) is required for interaction with MAPKs. A beta domain region spans residues 289 to 296 (SEEEELEL). Phosphothreonine; by MAPK7 and MAPK14 occurs at positions 312 and 319. Residue Thr-312 is modified to Phosphothreonine; by NLK. The residue at position 355 (Ser-355) is a Phosphoserine; by MAPK7. The tract at residues 397–507 (NQNISIKSEP…KRMRMDAWVT (111 aa)) is disordered. The residue at position 403 (Lys-403) is an N6-acetyllysine; alternate. Lys-403 participates in a covalent cross-link: Glycyl lysine isopeptide (Lys-Gly) (interchain with G-Cter in SUMO); alternate. Position 408 is a phosphoserine; by CDK5 (Ser-408). Thr-415 carries the post-translational modification Phosphothreonine. Over residues 420-429 (QQQQQQQQQQ) the composition is skewed to low complexity. Positions 430 to 445 (QPPPPPQPQPQPPQPQ) are enriched in pro residues. Ser-453 carries the post-translational modification Phosphoserine; by MAPK. A compositionally biased stretch (low complexity) spans 453 to 466 (SPVDSLSSSSSSYD). Basic and acidic residues-rich tracts occupy residues 467–477 (GSDREDPRGDF) and 488–507 (NTED…AWVT).

It belongs to the MEF2 family. Binds DNA as a homo- or heterodimer. Dimerizes with MEF2D. Interacts with HDAC7. Interacts with PIAS1; the interaction enhances sumoylation. Interacts with HDAC4, HDAC9 and SLC2A4RG. Interacts (via the N-terminal) with MAPK7; the interaction results in the phosphorylation and transcriptional activity of MEF2A. Post-translationally, constitutive phosphorylation on Ser-408 promotes Lys-403 sumoylation thus preventing acetylation at this site. Dephosphorylation on Ser-408 by PPP3CA upon neuron depolarization promotes a switch from sumoylation to acetylation on residue Lys-403 leading to inhibition of dendrite claw differentiation. Phosphorylation on Thr-312 and Thr-319 are the main sites involved in p38 MAPK signaling and activate transcription. Phosphorylated on these sites by MAPK14/p38alpha and MAPK11/p38beta, but not by MAPK13/p38delta nor by MAPK12/p38gamma. Phosphorylation on Ser-408 by CDK5 induced by neurotoxicity inhibits MEF2A transcriptional activation leading to apoptosis of cortical neurons. Phosphorylation on Thr-312, Thr-319 and Ser-355 can be induced by EGF. In terms of processing, sumoylation on Lys-403 is enhanced by PIAS1 and represses transcriptional activity. Phosphorylation on Ser-408 is required for sumoylation. Has no effect on nuclear location nor on DNA binding. Sumoylated with SUMO1 and, to a lesser extent with SUMO2 and SUMO3. PIASx facilitates sumoylation in postsynaptic dendrites in the cerebellar cortex and promotes their morphogenesis. Acetylation on Lys-403 activates transcriptional activity. Acetylated by p300 on several sites in diffentiating myocytes. Acetylation on Lys-4 increases DNA binding and transactivation. Hyperacetylation by p300 leads to enhanced cardiac myocyte growth and heart failure. Post-translationally, proteolytically cleaved in cerebellar granule neurons on several sites by caspase 3 and caspase 7 following neurotoxicity. Preferentially cleaves the CDK5-mediated hyperphosphorylated form which leads to neuron apoptosis and transcriptional inactivation. As to expression, isoform MEF2 and isoform MEFA are expressed only in skeletal and cardiac muscle and in the brain. Isoform RSRFC4 and isoform RSRFC9 are expressed in all tissues examined.

The protein resides in the nucleus. Transcriptional activator which binds specifically to the MEF2 element, 5'-YTA[AT](4)TAR-3', found in numerous muscle-specific genes. Also involved in the activation of numerous growth factor- and stress-induced genes. Mediates cellular functions not only in skeletal and cardiac muscle development, but also in neuronal differentiation and survival. Plays diverse roles in the control of cell growth, survival and apoptosis via p38 MAPK signaling in muscle-specific and/or growth factor-related transcription. In cerebellar granule neurons, phosphorylated and sumoylated MEF2A represses transcription of NUR77 promoting synaptic differentiation. Associates with chromatin to the ZNF16 promoter. This is Myocyte-specific enhancer factor 2A (MEF2A) from Homo sapiens (Human).